We begin with the raw amino-acid sequence, 339 residues long: Inositol 2-dehydrogenase (339 aa).

It belongs to the Gfo/Idh/MocA family. Homotetramer.

It catalyses the reaction myo-inositol + NAD(+) = scyllo-inosose + NADH + H(+). Functionally, involved in the oxidation of myo-inositol (MI) to 2-keto-myo-inositol (2KMI or 2-inosose). The sequence is that of Inositol 2-dehydrogenase from Leifsonia xyli subsp. xyli (strain CTCB07).